The following is a 160-amino-acid chain: tRNA (cytidine(34)-2'-O)-methyltransferase (160 aa).

Leu-78, Gly-100, Ile-122, and Ser-130 together coordinate S-adenosyl-L-methionine.

Belongs to the class IV-like SAM-binding methyltransferase superfamily. RNA methyltransferase TrmH family. TrmL subfamily. Homodimer.

It localises to the cytoplasm. It carries out the reaction cytidine(34) in tRNA + S-adenosyl-L-methionine = 2'-O-methylcytidine(34) in tRNA + S-adenosyl-L-homocysteine + H(+). The catalysed reaction is 5-carboxymethylaminomethyluridine(34) in tRNA(Leu) + S-adenosyl-L-methionine = 5-carboxymethylaminomethyl-2'-O-methyluridine(34) in tRNA(Leu) + S-adenosyl-L-homocysteine + H(+). Methylates the ribose at the nucleotide 34 wobble position in the two leucyl isoacceptors tRNA(Leu)(CmAA) and tRNA(Leu)(cmnm5UmAA). Catalyzes the methyl transfer from S-adenosyl-L-methionine to the 2'-OH of the wobble nucleotide. The chain is tRNA (cytidine(34)-2'-O)-methyltransferase from Haemophilus influenzae (strain ATCC 51907 / DSM 11121 / KW20 / Rd).